A 143-amino-acid polypeptide reads, in one-letter code: Transcriptional regulator MraZ (143 aa).

SpoVT-AbrB domains lie at 5-47 (THSP…TTRE) and 76-119 (ANAE…DAGT).

This sequence belongs to the MraZ family. As to quaternary structure, forms oligomers.

The protein localises to the cytoplasm. Its subcellular location is the nucleoid. The polypeptide is Transcriptional regulator MraZ (Clavibacter michiganensis subsp. michiganensis (strain NCPPB 382)).